The chain runs to 241 residues: 1-(5-phosphoribosyl)-5-[(5-phosphoribosylamino)methylideneamino] imidazole-4-carboxamide isomerase (241 aa).

The active-site Proton acceptor is the Asp-11. Asp-130 acts as the Proton donor in catalysis.

It belongs to the HisA/HisF family.

It is found in the cytoplasm. The enzyme catalyses 1-(5-phospho-beta-D-ribosyl)-5-[(5-phospho-beta-D-ribosylamino)methylideneamino]imidazole-4-carboxamide = 5-[(5-phospho-1-deoxy-D-ribulos-1-ylimino)methylamino]-1-(5-phospho-beta-D-ribosyl)imidazole-4-carboxamide. It participates in amino-acid biosynthesis; L-histidine biosynthesis; L-histidine from 5-phospho-alpha-D-ribose 1-diphosphate: step 4/9. The polypeptide is 1-(5-phosphoribosyl)-5-[(5-phosphoribosylamino)methylideneamino] imidazole-4-carboxamide isomerase (Acidothermus cellulolyticus (strain ATCC 43068 / DSM 8971 / 11B)).